We begin with the raw amino-acid sequence, 934 residues long: Complement component C6 (934 aa).

The first 21 residues, 1–21 (MARRSVLYFILLNALINKGQA), serve as a signal peptide directing secretion. Intrachain disulfides connect C22/C61, C24/C65, C35/C73, C39/C78, C82/C117, C93/C127, C96/C133, C140/C151, C146/C164, C158/C173, and C180/C218. TSP type-1 domains follow at residues 22–79 (CFCD…QRCP) and 81–134 (NCLL…KLCK). A glycan (C-linked (Man) tryptophan) is linked at W29. A glycan (C-linked (Man) tryptophan; partial) is linked at W32. O-linked (Fuc...) threonine glycosylation occurs at T38. C-linked (Man) tryptophan; partial glycosylation occurs at W90. One can recognise an LDL-receptor class A domain in the interval 138-175 (ADCKNKFRCDSGRCIARKLECNGENDCGDNSDERDCGR). Residues L156, N159, E161, D163, D169, and E170 each coordinate Ca(2+). Residues 176-522 (TKAVCTRKYN…EYAAKFDPCQ (347 aa)) form the MACPF domain. The chain crosses the membrane as a beta stranded span at residues 278–290 (SFSVPIFYSSKRS). The N-linked (GlcNAc...) asparagine glycan is linked to N324. O-linked (Fuc...) threonine glycosylation is present at T392. Cystine bridges form between C399/C420, C499/C623, C521/C570, C523/C539, C526/C541, C543/C552, C577/C611, C589/C601, C644/C686, C672/C699, C704/C746, C732/C761, C773/C823, C784/C801, C786/C837, and C793/C816. The beta stranded transmembrane segment at 402–415 (IETKKRVLFAKKTK) threads the bilayer. The region spanning 523–553 (CAPCPNNGRPTLSGTECLCVCQSGTYGENCE) is the EGF-like domain. Residues 565–612 (DGQWGCWSSWSTCDATYKRSRTRECNNPAPQRGGKRCEGEKRQEEDCT) enclose the TSP type-1 3 domain. Residues W568, W571, and W574 are each glycosylated (C-linked (Man) tryptophan; partial). 2 CCP regions span residues 611-688 (CTFS…RCLP) and 689-765 (DGTW…EKDT). 2 consecutive Sushi domains span residues 642–701 (SGCP…ECQR) and 702–763 (TECI…TCEK). The tract at residues 642-934 (SGCPQPVPPE…EILHPGKCLA (293 aa)) is C5b-binding domain. The interval 766–840 (LTKLKGHCQL…FLHIGSCQDG (75 aa)) is factor I module (FIM) 1. In terms of domain architecture, Kazal-like 1 spans 780–839 (SGSECICMSPEEDCSHHSEDLCVFDTDSNDYFTSPACKFLAEKCLNNQQLHFLHIGSCQD). N-linked (GlcNAc...) asparagine glycosylation occurs at N855. The segment at 858 to 934 (KKESCGYDTC…EILHPGKCLA (77 aa)) is factor I module (FIM) 2. Intrachain disulfides connect C862–C873, C867–C919, C880–C897, C882–C932, and C888–C912. Positions 876 to 934 (STSKCVCLLPPQCFKGGNQLYCVKMGSSTSEKTLNICEVGTIRCANRKMEILHPGKCLA) constitute a Kazal-like 2 domain.

The protein belongs to the complement C6/C7/C8/C9 family. Component of the membrane attack complex (MAC), composed of complement C5b, C6, C7, C8A, C8B, C8G and multiple copies of the pore-forming subunit C9. In terms of processing, all cysteine residues are assumed to be cross-linked to one another. Individual modules containing an even number of conserved cysteine residues are supposed to have disulfide linkages only within the same module.

Its subcellular location is the secreted. It is found in the target cell membrane. With respect to regulation, membrane attack complex (MAC) assembly is inhibited by CD59, thereby protecting self-cells from damage during complement activation. MAC assembly is also inhibited by clusterin (CLU) chaperones that inhibit polymerization of C9. Its function is as follows. Component of the membrane attack complex (MAC), a multiprotein complex activated by the complement cascade, which inserts into a target cell membrane and forms a pore, leading to target cell membrane rupture and cell lysis. The MAC is initiated by proteolytic cleavage of C5 into complement C5b in response to the classical, alternative, lectin and GZMK complement pathways. The complement pathways consist in a cascade of proteins that leads to phagocytosis and breakdown of pathogens and signaling that strengthens the adaptive immune system. Together with component C5b, involved in MAC complex assembly: complement C5b and C6 associate with the outer leaflet of target cell membrane, reducing the energy for membrane bending. The chain is Complement component C6 from Homo sapiens (Human).